The chain runs to 600 residues: 1-deoxy-D-xylulose-5-phosphate synthase (600 aa).

Thiamine diphosphate is bound by residues H57 and 98–100; that span reads GHA. D125 contributes to the Mg(2+) binding site. Thiamine diphosphate-binding positions include 126–127, N155, Y264, and E343; that span reads AS. N155 contributes to the Mg(2+) binding site.

This sequence belongs to the transketolase family. DXPS subfamily. In terms of assembly, homodimer. Requires Mg(2+) as cofactor. It depends on thiamine diphosphate as a cofactor.

It carries out the reaction D-glyceraldehyde 3-phosphate + pyruvate + H(+) = 1-deoxy-D-xylulose 5-phosphate + CO2. The protein operates within metabolic intermediate biosynthesis; 1-deoxy-D-xylulose 5-phosphate biosynthesis; 1-deoxy-D-xylulose 5-phosphate from D-glyceraldehyde 3-phosphate and pyruvate: step 1/1. In terms of biological role, catalyzes the acyloin condensation reaction between C atoms 2 and 3 of pyruvate and glyceraldehyde 3-phosphate to yield 1-deoxy-D-xylulose-5-phosphate (DXP). This is 1-deoxy-D-xylulose-5-phosphate synthase from Fusobacterium nucleatum subsp. nucleatum (strain ATCC 25586 / DSM 15643 / BCRC 10681 / CIP 101130 / JCM 8532 / KCTC 2640 / LMG 13131 / VPI 4355).